Consider the following 509-residue polypeptide: Cytochrome P450 monooxygenase ARMGADRAFT_974139 (509 aa).

Residues 4-24 (ASLAVVVWAILLVLWLRRIFG) form a helical membrane-spanning segment. Residues Asn-96 and Asn-279 are each glycosylated (N-linked (GlcNAc...) asparagine). Cys-439 contributes to the heme binding site.

The protein belongs to the cytochrome P450 family. The cofactor is heme.

The protein resides in the membrane. Its pathway is secondary metabolite biosynthesis. Cytochrome P450 monooxygenase, part of the gene cluster that mediates the biosynthesis of melleolides, a range of antifungal and phytotoxic polyketide derivatives composed of an orsellinic acid (OA) moiety esterified to various sesquiterpene alcohols. The first step in melleolides biosynthesis is performed by the delta(6)-protoilludene synthase PRO1 which catalyzes the cyclization of farnesyl diphosphate to protoilludene. The orsellinic acid synthase armB produces OA by condensing acetyl-CoA with 3 malonyl-CoA units in a three-round chain elongation reaction folowed by a C2-C7 ring closure. ArmB further catalyzes the trans-esterification of OA to the various sesquiterpene alcohols resulting from the hydroxylation of protoilludene. The melleolides cluster also includes 5 cytochrome P450 monooxygenases, 4 NAD(+)-dependent oxidoreductases, one flavin-dependent oxidoreductase, and one O-methyltransferase. The cytochrome P450 monooxygenases may be involved in protoilludene hydroxylation to elaborate melleolides with multiple alcohol groups, such as melleolide D, which carries alcohol functionalities at C-4, C-5, C-10, and C-13. The role of the NAD(+)-dependent enzymes remains unknown. Numerous melleolides, including arnamial, show 5'-O-methylation of the aromatic moiety which may be catalyzed by the methyltransferase encoded in the cluster. The flavin-dependent oxidoreductase might represent the dehydrogenase yielding the aldehyde in position 1 of arnamial and other melleolides. Finally, several halogenase localized outside of the cluster, are able to catalyze the transfer of a single chlorine atom to the melleolide backbone, resulting in a 6'-chloromelleolide product. The sequence is that of Cytochrome P450 monooxygenase ARMGADRAFT_974139 from Armillaria gallica (Bulbous honey fungus).